The chain runs to 642 residues: 1-deoxy-D-xylulose-5-phosphate synthase (642 aa).

Thiamine diphosphate-binding positions include His-73 and 114-116 (SHA). Asp-145 contributes to the Mg(2+) binding site. Residues 146-147 (GA), Asn-175, Phe-286, and Glu-367 contribute to the thiamine diphosphate site. Asn-175 contacts Mg(2+).

The protein belongs to the transketolase family. DXPS subfamily. As to quaternary structure, homodimer. It depends on Mg(2+) as a cofactor. Thiamine diphosphate serves as cofactor.

The catalysed reaction is D-glyceraldehyde 3-phosphate + pyruvate + H(+) = 1-deoxy-D-xylulose 5-phosphate + CO2. It participates in metabolic intermediate biosynthesis; 1-deoxy-D-xylulose 5-phosphate biosynthesis; 1-deoxy-D-xylulose 5-phosphate from D-glyceraldehyde 3-phosphate and pyruvate: step 1/1. Its function is as follows. Catalyzes the acyloin condensation reaction between C atoms 2 and 3 of pyruvate and glyceraldehyde 3-phosphate to yield 1-deoxy-D-xylulose-5-phosphate (DXP). The sequence is that of 1-deoxy-D-xylulose-5-phosphate synthase from Saccharopolyspora erythraea (strain ATCC 11635 / DSM 40517 / JCM 4748 / NBRC 13426 / NCIMB 8594 / NRRL 2338).